The sequence spans 151 residues: Ribosome maturation factor RimP (151 aa).

This sequence belongs to the RimP family.

It localises to the cytoplasm. Its function is as follows. Required for maturation of 30S ribosomal subunits. This chain is Ribosome maturation factor RimP, found in Shewanella sediminis (strain HAW-EB3).